A 217-amino-acid polypeptide reads, in one-letter code: Coiled-coil domain-containing protein 124-B (217 aa).

Residues 1-123 form a disordered region; sequence MPKKFQSENT…EKPKTHLEIP (123 aa). Composition is skewed to basic and acidic residues over residues 18–45, 52–74, and 98–123; these read RKAEAKAVADAKRKKETEDAFWQDDDKH, RKEEKEKKRLELLERKKESQRLL, and QIEETLCKEEKHKDAPEKPKTHLEIP. Residues 41-83 adopt a coiled-coil conformation; sequence DDDKHVVRKEHRKEEKEKKRLELLERKKESQRLLDEEDSKMKG.

Belongs to the CCDC124 family. In terms of assembly, associates with translationally inactive ribosomes in the nonrotated state.

It is found in the cytoplasm. It localises to the cytoskeleton. The protein localises to the microtubule organizing center. The protein resides in the centrosome. Its subcellular location is the midbody. Ribosome-binding protein involved in ribosome hibernation: associates with translationally inactive ribosomes and stabilizes the nonrotated conformation of the 80S ribosome, thereby promoting ribosome preservation and storage. The polypeptide is Coiled-coil domain-containing protein 124-B (ccdc124-b) (Xenopus laevis (African clawed frog)).